A 713-amino-acid polypeptide reads, in one-letter code: Low-density lipoprotein receptor-related protein 10 (713 aa).

The first 16 residues, 1 to 16 (MLLATLLLLLLGGALA), serve as a signal peptide directing secretion. Topologically, residues 17–440 (HPDRIIFPNH…WDCSYVLPRK (424 aa)) are extracellular. Intrachain disulfides connect Cys-28/Cys-57 and Cys-80/Cys-98. In terms of domain architecture, CUB 1 spans 28 to 136 (CEDPPAVLLE…QGFLLSYSQD (109 aa)). Asn-56 carries N-linked (GlcNAc...) asparagine glycosylation. Asn-111 carries N-linked (GlcNAc...) asparagine glycosylation. One can recognise an LDL-receptor class A 1 domain in the interval 139–175 (MCLQEEFQCLNHRCVSAVQRCDGVDACGDGSDEAGCS). 4 cysteine pairs are disulfide-bonded: Cys-140/Cys-152, Cys-147/Cys-165, Cys-159/Cys-174, and Cys-192/Cys-220. The 114-residue stretch at 192–305 (CNVTLEDFYG…RGFNATYHVR (114 aa)) folds into the CUB 2 domain. Residues Asn-193 and Asn-299 are each glycosylated (N-linked (GlcNAc...) asparagine). LDL-receptor class A domains follow at residues 307 to 354 (YCLP…EDCP), 355 to 397 (GCPP…RRCR), and 398 to 434 (HCQPGNFRCRDEKCVYETWVCDGQPDCADGSDEWDCS). 9 disulfides stabilise this stretch: Cys-308–Cys-331, Cys-315–Cys-344, Cys-338–Cys-353, Cys-356–Cys-374, Cys-363–Cys-387, Cys-381–Cys-396, Cys-399–Cys-411, Cys-406–Cys-424, and Cys-418–Cys-433. A helical transmembrane segment spans residues 441-461 (VITAAVIGSLVCGLLLVIALG). Residues 462–713 (CTCKLYAIRT…AEAEDEPLLT (252 aa)) lie on the Cytoplasmic side of the membrane. A disordered region spans residues 564–637 (GLLPRTNTPA…SPAPTTVPEA (74 aa)). The segment covering 569–584 (TNTPARASEARSQVTP) has biased composition (polar residues). Thr-596 is modified (phosphothreonine). The span at 621–636 (PLPSASTSPAPTTVPE) shows a compositional bias: low complexity.

It belongs to the LDLR family. Expressed in blood leukocyte, lung, placenta, small intestine, liver, kidney, spleen, thymus, colon, skeletal muscle and heart.

The protein localises to the membrane. Its subcellular location is the coated pit. Its function is as follows. Probable receptor, which is involved in the internalization of lipophilic molecules and/or signal transduction. May be involved in the uptake of lipoprotein APOE in liver. The polypeptide is Low-density lipoprotein receptor-related protein 10 (LRP10) (Homo sapiens (Human)).